Consider the following 471-residue polypeptide: Tryptophanase (471 aa).

Lysine 5, lysine 115, and lysine 156 each carry N6-acetyllysine. Lysine 270 bears the N6-(pyridoxal phosphate)lysine mark. Position 450 is an N6-acetyllysine (lysine 450).

This sequence belongs to the beta-eliminating lyase family. As to quaternary structure, homotetramer. Requires pyridoxal 5'-phosphate as cofactor.

It carries out the reaction L-tryptophan + H2O = indole + pyruvate + NH4(+). Its pathway is amino-acid degradation; L-tryptophan degradation via pyruvate pathway; indole and pyruvate from L-tryptophan: step 1/1. The polypeptide is Tryptophanase (Escherichia coli O139:H28 (strain E24377A / ETEC)).